The following is a 100-amino-acid chain: NAD(P)H-quinone oxidoreductase subunit 4L, chloroplastic (100 aa).

3 helical membrane-spanning segments follow: residues 2–22 (ILQHILILSSFLFCLGIFGLI), 28–48 (VKILICLELIFNAVNLNLVIF), and 61–81 (LFGLFIIAIAAAEAAIALAIL).

Belongs to the complex I subunit 4L family. NDH is composed of at least 16 different subunits, 5 of which are encoded in the nucleus.

The protein localises to the plastid. It localises to the chloroplast thylakoid membrane. The catalysed reaction is a plastoquinone + NADH + (n+1) H(+)(in) = a plastoquinol + NAD(+) + n H(+)(out). It carries out the reaction a plastoquinone + NADPH + (n+1) H(+)(in) = a plastoquinol + NADP(+) + n H(+)(out). In terms of biological role, NDH shuttles electrons from NAD(P)H:plastoquinone, via FMN and iron-sulfur (Fe-S) centers, to quinones in the photosynthetic chain and possibly in a chloroplast respiratory chain. The immediate electron acceptor for the enzyme in this species is believed to be plastoquinone. Couples the redox reaction to proton translocation, and thus conserves the redox energy in a proton gradient. The polypeptide is NAD(P)H-quinone oxidoreductase subunit 4L, chloroplastic (Chara vulgaris (Common stonewort)).